The sequence spans 209 residues: COP9 signalosome complex subunit 8 (209 aa).

Residues 8–179 (DNAFSFRKLL…GTLDVSLNRF (172 aa)) form the PCI domain. Serine 175 bears the Phosphoserine mark.

It belongs to the CSN8 family. In terms of assembly, component of the CSN complex, composed of COPS1/GPS1, COPS2, COPS3, COPS4, COPS5, COPS6, COPS7 (COPS7A or COPS7B), COPS8 and COPS9. In the complex, it probably interacts directly with COPS3, COPS4 and COPS7 (COPS7A or COPS7B). In terms of tissue distribution, widely expressed.

The protein localises to the cytoplasm. Its subcellular location is the nucleus. Component of the COP9 signalosome complex (CSN), a complex involved in various cellular and developmental processes. The CSN complex is an essential regulator of the ubiquitin (Ubl) conjugation pathway by mediating the deneddylation of the cullin subunits of SCF-type E3 ligase complexes, leading to decrease the Ubl ligase activity of SCF-type complexes such as SCF, CSA or DDB2. The complex is also involved in phosphorylation of p53/TP53, c-jun/JUN, IkappaBalpha/NFKBIA, ITPK1 and IRF8/ICSBP, possibly via its association with CK2 and PKD kinases. CSN-dependent phosphorylation of TP53 and JUN promotes and protects degradation by the Ubl system, respectively. The protein is COP9 signalosome complex subunit 8 (Cops8) of Mus musculus (Mouse).